Consider the following 114-residue polypeptide: Small ribosomal subunit protein uS17 (114 aa).

It belongs to the universal ribosomal protein uS17 family. As to quaternary structure, part of the 30S ribosomal subunit.

In terms of biological role, one of the primary rRNA binding proteins, it binds specifically to the 5'-end of 16S ribosomal RNA. This is Small ribosomal subunit protein uS17 from Saccharolobus solfataricus (strain ATCC 35092 / DSM 1617 / JCM 11322 / P2) (Sulfolobus solfataricus).